The following is a 410-amino-acid chain: NIPA-like protein 3 (410 aa).

Residues 1–24 form a disordered region; the sequence is MDGAHSAGLQLQPLPPTSGATSTS. Transmembrane regions (helical) follow at residues 37–57, 80–100, 105–125, 139–159, 175–195, 206–226, 244–264, 275–295, and 304–324; these read NLIGALLAIFGHLVVSIALNL, WWLGLLLLLLGELGVFASYAF, LIVPLSAVSVIASAIIGIIFI, VLSFVGCGLAIVGTYLLVTFA, LVSWPFLLYMLVAIVLFCLLL, IVVILLLVALLGSMTVVTVKA, PIFYVMFVCMVATAIYQATFL, LIASVGYILSTTAAITAGAIF, and ALHICMFALGCLIAFLGVFLI. S376 carries the phosphoserine modification. The segment at 389 to 410 is disordered; that stretch reads EEHSSRSTPGVPYRVLEHTKKE.

This sequence belongs to the NIPA family.

It localises to the membrane. The chain is NIPA-like protein 3 (Nipal3) from Mus musculus (Mouse).